Here is a 466-residue protein sequence, read N- to C-terminus: 3-isopropylmalate dehydratase large subunit (466 aa).

[4Fe-4S] cluster-binding residues include C347, C407, and C410.

It belongs to the aconitase/IPM isomerase family. LeuC type 1 subfamily. In terms of assembly, heterodimer of LeuC and LeuD. [4Fe-4S] cluster is required as a cofactor.

It carries out the reaction (2R,3S)-3-isopropylmalate = (2S)-2-isopropylmalate. It participates in amino-acid biosynthesis; L-leucine biosynthesis; L-leucine from 3-methyl-2-oxobutanoate: step 2/4. In terms of biological role, catalyzes the isomerization between 2-isopropylmalate and 3-isopropylmalate, via the formation of 2-isopropylmaleate. The polypeptide is 3-isopropylmalate dehydratase large subunit (Shewanella piezotolerans (strain WP3 / JCM 13877)).